We begin with the raw amino-acid sequence, 318 residues long: L-lactate dehydrogenase (318 aa).

4 residues coordinate NAD(+): Val14, Asp35, Lys40, and Tyr66. Substrate-binding positions include Arg89 and 121–124 (NPVD). Ser144 lines the NAD(+) pocket. 149-152 (DTAR) is a substrate binding site. The active-site Proton acceptor is the His176. Tyr220 carries the phosphotyrosine modification. Thr229 is a binding site for substrate.

Belongs to the LDH/MDH superfamily. LDH family. Homotetramer.

It is found in the cytoplasm. It catalyses the reaction (S)-lactate + NAD(+) = pyruvate + NADH + H(+). It functions in the pathway fermentation; pyruvate fermentation to lactate; (S)-lactate from pyruvate: step 1/1. In terms of biological role, catalyzes the conversion of lactate to pyruvate. This chain is L-lactate dehydrogenase, found in Staphylococcus haemolyticus (strain JCSC1435).